The primary structure comprises 391 residues: 8-amino-7-oxononanoate synthase (391 aa).

Position 20 (R20) interacts with substrate. 106 to 107 (GY) is a pyridoxal 5'-phosphate binding site. Position 131 (H131) interacts with substrate. Residues S178, H206, and T234 each contribute to the pyridoxal 5'-phosphate site. At K237 the chain carries N6-(pyridoxal phosphate)lysine. T353 contributes to the substrate binding site.

The protein belongs to the class-II pyridoxal-phosphate-dependent aminotransferase family. BioF subfamily. Homodimer. It depends on pyridoxal 5'-phosphate as a cofactor.

It carries out the reaction 6-carboxyhexanoyl-[ACP] + L-alanine + H(+) = (8S)-8-amino-7-oxononanoate + holo-[ACP] + CO2. It functions in the pathway cofactor biosynthesis; biotin biosynthesis. Catalyzes the decarboxylative condensation of pimeloyl-[acyl-carrier protein] and L-alanine to produce 8-amino-7-oxononanoate (AON), [acyl-carrier protein], and carbon dioxide. The chain is 8-amino-7-oxononanoate synthase from Trichlorobacter lovleyi (strain ATCC BAA-1151 / DSM 17278 / SZ) (Geobacter lovleyi).